Consider the following 448-residue polypeptide: MPGFKRILTVTVLALCLPTPGNAQQQCTNGFDLDRSSGQCLDVDECRTIPEACRGDMMCVNQNGGYLCIPRTNPVYRGPYSNPYSNPYSASYPAAAPPLSAPNYPTISRPLICRFGYQMDESNQCVDVDECATDSHQCNPTQICINTEGGYTCSCTDGYWLLEGQCLDIDECRYGYCQQLCANVPGSYSCTCNPGFTLNEDGRSCQDVNECATENPCVQTCVNTYGSFICRCDPGYELEDDGVHCSDMDECSFSEFLCQHECVNQPGTYFCSCPAGYILLDDNRSCQDINECEHRNHTCILQQTCYNLQGGFKCIDPIRCEEPYLRISDNRCMCPAENPGCRDQPFTILYRDMDVVSGRSVPADIFQMQATTRYPGAYYIFQIKSGNDGREFYMRQTGPISATLVMTRPIKGPRDIQLDLEMITVNTVINFRGSSVIRLRIYVSQYPF.

An N-terminal signal peptide occupies residues 1-23 (MPGFKRILTVTVLALCLPTPGNA). Positions 42 to 82 (DVDECRTIPEACRGDMMCVNQNGGYLCIPRTNPVYRGPYSN) constitute an EGF-like 1; calcium-binding domain. Cystine bridges form between Cys46/Cys59, Cys53/Cys68, Cys131/Cys144, Cys138/Cys153, Cys155/Cys166, Cys172/Cys181, Cys177/Cys190, Cys192/Cys205, Cys211/Cys221, Cys217/Cys230, Cys232/Cys245, Cys251/Cys262, Cys258/Cys271, Cys273/Cys286, Cys292/Cys305, Cys299/Cys314, and Cys320/Cys332. The Cell attachment site motif lies at 54 to 56 (RGD). In terms of domain architecture, EGF-like 2; calcium-binding spans 127 to 167 (DVDECATDSHQCNPTQICINTEGGYTCSCTDGYWLLEGQCL). In terms of domain architecture, EGF-like 3; calcium-binding spans 168 to 206 (DIDECRYGYCQQLCANVPGSYSCTCNPGFTLNEDGRSCQ). One can recognise an EGF-like 4; calcium-binding domain in the interval 207–246 (DVNECATENPCVQTCVNTYGSFICRCDPGYELEDDGVHCS). Residues 245–448 (CSDMDECSFS…LRIYVSQYPF (204 aa)) are interaction with LOXL1. In terms of domain architecture, EGF-like 5; calcium-binding spans 247–287 (DMDECSFSEFLCQHECVNQPGTYFCSCPAGYILLDDNRSCQ). Asn283 and Asn296 each carry an N-linked (GlcNAc...) asparagine glycan. Positions 288–333 (DINECEHRNHTCILQQTCYNLQGGFKCIDPIRCEEPYLRISDNRCM) constitute an EGF-like 6; calcium-binding domain.

It belongs to the fibulin family. As to quaternary structure, homodimer. Monomer, homodimerizes in presence of Ca(2+). Interacts with ELN. Interacts (via N-terminus) with the integrins ITGAV/ITGB3, ITGAV/ITGB5 and ITGA9/ITGB1. Interacts with FBN1 (via N-terminal domain). Forms a ternary complex with ELN and FBN1. Interacts with EFEMP2 with moderate affinity. Interacts with LOXL1. In terms of processing, N-glycosylated.

Its subcellular location is the secreted. The protein localises to the extracellular space. It is found in the extracellular matrix. Functionally, essential for elastic fiber formation, is involved in the assembly of continuous elastin (ELN) polymer and promotes the interaction of microfibrils and ELN. Stabilizes and organizes elastic fibers in the skin, lung and vasculature. Promotes adhesion of endothelial cells through interaction of integrins and the RGD motif. Vascular ligand for integrin receptors which may play a role in vascular development and remodeling. May act as an adapter that mediates the interaction between FBN1 and ELN. The sequence is that of Fibulin-5 (FBLN5) from Bos taurus (Bovine).